The following is a 227-amino-acid chain: Probable cell wall protein PGA42 (227 aa).

The N-terminal stretch at Met-1 to Ala-16 is a signal peptide. Residue Asn-192 is glycosylated (N-linked (GlcNAc...) asparagine). Ser-200 carries GPI-anchor amidated serine lipidation. A propeptide spans Gly-201 to Val-227 (removed in mature form).

This sequence belongs to the IHD1 family. In terms of processing, the GPI-anchor is attached to the protein in the endoplasmic reticulum and serves to target the protein to the cell surface. There, the glucosamine-inositol phospholipid moiety is cleaved off and the GPI-modified mannoprotein is covalently attached via its lipidless GPI glycan remnant to the 1,6-beta-glucan of the outer cell wall layer.

The protein resides in the secreted. It localises to the cell wall. The protein localises to the membrane. In terms of biological role, probable GPI-anchored cell wall protein that may be involved in cell wall organization, hyphal growth, as well as in virulence. This Candida albicans (strain SC5314 / ATCC MYA-2876) (Yeast) protein is Probable cell wall protein PGA42 (PGA42).